A 149-amino-acid chain; its full sequence is VapC ribonuclease PF0355 (149 aa).

Residues T8–P122 enclose the PINc domain. D10 and D98 together coordinate Mg(2+).

The protein belongs to the PINc/VapC protein family. Requires Mg(2+) as cofactor.

Toxic component of a type II toxin-antitoxin (TA) system. An RNase. This Pyrococcus furiosus (strain ATCC 43587 / DSM 3638 / JCM 8422 / Vc1) protein is VapC ribonuclease PF0355.